Reading from the N-terminus, the 212-residue chain is ATP-dependent dethiobiotin synthetase BioD (212 aa).

An ATP-binding site is contributed by 12 to 17 (DCGKTF). Position 16 (T16) interacts with Mg(2+). Residue K33 is part of the active site. Position 37 (S37) interacts with substrate. Residues D50, 110–113 (EGAG), and 170–171 (NC) each bind ATP. Mg(2+)-binding residues include D50 and E110.

The protein belongs to the dethiobiotin synthetase family. As to quaternary structure, homodimer. The cofactor is Mg(2+).

It is found in the cytoplasm. It catalyses the reaction (7R,8S)-7,8-diammoniononanoate + CO2 + ATP = (4R,5S)-dethiobiotin + ADP + phosphate + 3 H(+). It participates in cofactor biosynthesis; biotin biosynthesis; biotin from 7,8-diaminononanoate: step 1/2. Catalyzes a mechanistically unusual reaction, the ATP-dependent insertion of CO2 between the N7 and N8 nitrogen atoms of 7,8-diaminopelargonic acid (DAPA, also called 7,8-diammoniononanoate) to form a ureido ring. This chain is ATP-dependent dethiobiotin synthetase BioD, found in Legionella pneumophila (strain Corby).